Here is a 648-residue protein sequence, read N- to C-terminus: MERKVLALQARKKRTKAKKDKAQRKPETQHRGSAPHSESDIPEQEEEILGSDDDEQEDPNDYCKGGYHLVKIGDLFNGRYHVIRKLGWGHFSTVWLSWDIQGKKFVAMKVVKSAEHYTETALDEIRLLKSVRNSDPNDPNGEMVVQLLDDFKISGVNGTHICMVFEVLGHHLLKWIIKSNYQGLPLPCVKKIIQQVLQGLDYLHTKCRIIHTDIKPENILLSVNEQYIRRLAAEATEWQRSGAPPPSGSAVSTAPQPKPADKMSKNKKKKLKKKQKRQAELLEKRMQEIEEMEKESGPGQKRPNKQEESESPVDRPLTENPPNKMTQEKLEESNSIGQDQTLTERGGEGGAPEINCNGVIGVVNYPENSNNETLRHKEDLHNANDCDVHTLKQEPSFLNSSNGDSSPSQDTDSCTPTASETMVCQSSAEQSLTRQDITQLEESIRADTPSGDEQEPNGALDSKGKFSAGNFLINPLEPKNAEKLQVKIADLGNACWVHKHFTEDIQTRQYRSLEVLIGSGYNTPADIWSTACMAFELATGDYLFEPHSGEDYTRDEDHIALIIELLGKVPRKLIVAGKYSKEFFTKKGDLKHITKLKPWGLLEVLVEKYEWPQEEAAGFTDFLLPMLELMPEKRATAAECLRHPWLNS.

Residues 1-57 (MERKVLALQARKKRTKAKKDKAQRKPETQHRGSAPHSESDIPEQEEEILGSDDDEQE) form a disordered region. A compositionally biased stretch (basic residues) spans 10–22 (ARKKRTKAKKDKA). Residues 40–57 (DIPEQEEEILGSDDDEQE) show a composition bias toward acidic residues. The residue at position 51 (S51) is a Phosphoserine. A Protein kinase domain is found at 80 to 646 (YHVIRKLGWG…AAECLRHPWL (567 aa)). ATP is bound by residues 86–94 (LGWGHFSTV) and K109. D213 serves as the catalytic Proton acceptor. Disordered stretches follow at residues 238 to 354 (WQRS…APEI) and 395 to 464 (PSFL…DSKG). Over residues 265–276 (KNKKKKLKKKQK) the composition is skewed to basic residues. 2 stretches are compositionally biased toward basic and acidic residues: residues 277 to 288 (RQAELLEKRMQE) and 304 to 317 (NKQEESESPVDRPL). Phosphoserine occurs at positions 309, 311, and 333. 2 stretches are compositionally biased toward polar residues: residues 333-343 (SNSIGQDQTLT) and 396-441 (SFLN…TQLE). T448 is subject to Phosphothreonine. Position 450 is a phosphoserine (S450). S548 is subject to Phosphoserine; by CK2.

The protein belongs to the protein kinase superfamily. CMGC Ser/Thr protein kinase family. As to quaternary structure, monomer. Found in a multisubunit complex containing seven proteins, named toposome, which separates entangled circular chromatin DNA during chromosome segregation. Interacts with HHV-1 ICP27 protein. Interacts with DNAJC8 and AHSA1/AHA1 and this mediates formation of a complex with the Hsp70 /Hsp90 machinery. Binds to IGF2BP1, SYNCRIP, HNRNPA2B1 and HNRNPC. Interacts with SAFB/SAFB1 and SAFB2 which inhibits its activity. Mg(2+) is required as a cofactor. In terms of tissue distribution, predominantly expressed in the testis but is also present at lower levels in heart, spleen, liver, brain, kidney, lung and skeletal muscle. Present in all germinal cells in the seminiferous tubules but not in mature spermatozoa.

The protein localises to the cytoplasm. Its subcellular location is the nucleus. It localises to the nucleoplasm. It is found in the nucleus matrix. The protein resides in the microsome. The protein localises to the nucleus speckle. Its subcellular location is the chromosome. The enzyme catalyses L-seryl-[protein] + ATP = O-phospho-L-seryl-[protein] + ADP + H(+). The catalysed reaction is L-threonyl-[protein] + ATP = O-phospho-L-threonyl-[protein] + ADP + H(+). Its activity is regulated as follows. Activated by phosphorylation on Ser-51 and Ser-548. In terms of biological role, serine/arginine-rich protein-specific kinase which specifically phosphorylates its substrates at serine residues located in regions rich in arginine/serine dipeptides, known as RS domains and is involved in the phosphorylation of SR splicing factors and the regulation of splicing. Plays a central role in the regulatory network for splicing, controlling the intranuclear distribution of splicing factors in interphase cells and the reorganization of nuclear speckles during mitosis. Can influence additional steps of mRNA maturation, as well as other cellular activities, such as chromatin reorganization in somatic and sperm cells and cell cycle progression. Phosphorylates SFRS2, ZRSR2, LBR and PRM1. Phosphorylates SRSF1 using a directional (C-terminal to N-terminal) and a dual-track mechanism incorporating both processive phosphorylation (in which the kinase stays attached to the substrate after each round of phosphorylation) and distributive phosphorylation steps (in which the kinase and substrate dissociate after each phosphorylation event). The RS domain of SRSF1 binds first to a docking groove in the large lobe of the kinase domain of SRPK1. This induces certain structural changes in SRPK1 and/or RRM2 domain of SRSF1, allowing RRM2 to bind the kinase and initiate phosphorylation. The cycles continue for several phosphorylation steps in a processive manner (steps 1-8) until the last few phosphorylation steps (approximately steps 9-12). During that time, a mechanical stress induces the unfolding of the beta-4 motif in RRM2, which then docks at the docking groove of SRPK1. This also signals RRM2 to begin to dissociate, which facilitates SRSF1 dissociation after phosphorylation is completed. Can mediate hepatitis B virus (HBV) core protein phosphorylation. It plays a negative role in the regulation of HBV replication through a mechanism not involving the phosphorylation of the core protein but by reducing the packaging efficiency of the pregenomic RNA (pgRNA) without affecting the formation of the viral core particles. Can induce splicing of exon 10 in MAPT/TAU. This Mus musculus (Mouse) protein is SRSF protein kinase 1.